Consider the following 251-residue polypeptide: 4-hydroxy-tetrahydrodipicolinate reductase (251 aa).

NAD(+) is bound by residues glycine 9–methionine 14, alanine 85–threonine 87, and serine 109–methionine 112. The Proton donor/acceptor role is filled by histidine 141. Residue histidine 142 coordinates (S)-2,3,4,5-tetrahydrodipicolinate. Lysine 145 acts as the Proton donor in catalysis. Glycine 151–threonine 152 contributes to the (S)-2,3,4,5-tetrahydrodipicolinate binding site.

The protein belongs to the DapB family.

The protein localises to the cytoplasm. It carries out the reaction (S)-2,3,4,5-tetrahydrodipicolinate + NAD(+) + H2O = (2S,4S)-4-hydroxy-2,3,4,5-tetrahydrodipicolinate + NADH + H(+). The catalysed reaction is (S)-2,3,4,5-tetrahydrodipicolinate + NADP(+) + H2O = (2S,4S)-4-hydroxy-2,3,4,5-tetrahydrodipicolinate + NADPH + H(+). Its pathway is amino-acid biosynthesis; L-lysine biosynthesis via DAP pathway; (S)-tetrahydrodipicolinate from L-aspartate: step 4/4. Functionally, catalyzes the conversion of 4-hydroxy-tetrahydrodipicolinate (HTPA) to tetrahydrodipicolinate. This chain is 4-hydroxy-tetrahydrodipicolinate reductase, found in Caldanaerobacter subterraneus subsp. tengcongensis (strain DSM 15242 / JCM 11007 / NBRC 100824 / MB4) (Thermoanaerobacter tengcongensis).